Consider the following 112-residue polypeptide: UPF0102 protein C8J_0145 (112 aa).

It belongs to the UPF0102 family.

The sequence is that of UPF0102 protein C8J_0145 from Campylobacter jejuni subsp. jejuni serotype O:6 (strain 81116 / NCTC 11828).